The chain runs to 269 residues: 4-hydroxy-tetrahydrodipicolinate reductase (269 aa).

Residues G9–M14 and E35 contribute to the NAD(+) site. R36 provides a ligand contact to NADP(+). Residues G98–T100 and A122–Y125 each bind NAD(+). H155 functions as the Proton donor/acceptor in the catalytic mechanism. H156 serves as a coordination point for (S)-2,3,4,5-tetrahydrodipicolinate. Catalysis depends on K159, which acts as the Proton donor. G165–T166 is a binding site for (S)-2,3,4,5-tetrahydrodipicolinate.

Belongs to the DapB family.

Its subcellular location is the cytoplasm. The enzyme catalyses (S)-2,3,4,5-tetrahydrodipicolinate + NAD(+) + H2O = (2S,4S)-4-hydroxy-2,3,4,5-tetrahydrodipicolinate + NADH + H(+). It catalyses the reaction (S)-2,3,4,5-tetrahydrodipicolinate + NADP(+) + H2O = (2S,4S)-4-hydroxy-2,3,4,5-tetrahydrodipicolinate + NADPH + H(+). The protein operates within amino-acid biosynthesis; L-lysine biosynthesis via DAP pathway; (S)-tetrahydrodipicolinate from L-aspartate: step 4/4. Its function is as follows. Catalyzes the conversion of 4-hydroxy-tetrahydrodipicolinate (HTPA) to tetrahydrodipicolinate. This Actinobacillus pleuropneumoniae serotype 7 (strain AP76) protein is 4-hydroxy-tetrahydrodipicolinate reductase.